The chain runs to 346 residues: D-alanine--D-alanine ligase (346 aa).

One can recognise an ATP-grasp domain in the interval 133 to 327 (KLYAKSVGVK…ALADQISLEK (195 aa)). 159-211 (LSFPCIIKPARLGSSIGISIVKDEKDLEYAKDVGFEFDNDLVVEEFKNNIKEY) is an ATP binding site. Mg(2+)-binding residues include D284, E296, and N298.

This sequence belongs to the D-alanine--D-alanine ligase family. Mg(2+) serves as cofactor. Requires Mn(2+) as cofactor.

It is found in the cytoplasm. The catalysed reaction is 2 D-alanine + ATP = D-alanyl-D-alanine + ADP + phosphate + H(+). Its pathway is cell wall biogenesis; peptidoglycan biosynthesis. Functionally, cell wall formation. This Campylobacter jejuni subsp. jejuni serotype O:23/36 (strain 81-176) protein is D-alanine--D-alanine ligase.